The following is a 551-amino-acid chain: Alkaline nuclease (551 aa).

The protein belongs to the herpesviridae alkaline nuclease family. As to quaternary structure, interacts with major DNA-binding protein; this interaction increases the nuclease processivity of the alkaline exonuclease.

The protein localises to the host nucleus. It is found in the host cytoplasm. Functionally, plays a role in processing non linear or branched viral DNA intermediates in order to promote the production of mature packaged unit-length linear progeny viral DNA molecules. Exhibits endonuclease and exonuclease activities and accepts both double-stranded and single-stranded DNA as substrate. Exonuclease digestion of DNA is in the 5'-&gt; 3' direction and the products are 5'-monophosphate nucleosides. Additionally, forms a recombinase with the major DNA-binding protein, which displays strand exchange activity. In Varicella-zoster virus (strain Oka vaccine) (HHV-3), this protein is Alkaline nuclease.